The following is a 146-amino-acid chain: Hemoglobin subunit beta (146 aa).

Val1 is subject to N-acetylvaline. A Globin domain is found at 2-146 (HLTPEEKVAV…VANALAHKYH (145 aa)). Thr12 carries the phosphothreonine modification. Phosphoserine is present on Ser44. Lys59 is modified (N6-acetyllysine). His63 contacts heme b. Position 82 is an N6-acetyllysine (Lys82). His92 contacts heme b. Position 93 is an S-nitrosocysteine (Cys93). N6-acetyllysine is present on Lys144.

It belongs to the globin family. In terms of assembly, heterotetramer of two alpha chains and two beta chains. Red blood cells.

Its function is as follows. Involved in oxygen transport from the lung to the various peripheral tissues. The protein is Hemoglobin subunit beta (HBB) of Cercocebus atys (Sooty mangabey).